The chain runs to 123 residues: Potassium voltage-gated channel subfamily E member 2 (123 aa).

N-linked (GlcNAc...) asparagine glycosylation is found at N6 and N29. The helical transmembrane segment at 49-69 threads the bilayer; sequence VILYLMVMIGMFSFIVVAILV. Topologically, residues 70–123 are cytoplasmic; that stretch reads STVKSKRREHSQHPYHQYIVEDWQEKYKSQILHLEDSKATIHENMGATGFTVSP.

The protein belongs to the potassium channel KCNE family. Interacts with KCNB1. Associates with KCNH2/ERG1. May associate with KCNQ2 and KCNQ3. Associates with HCN1 and probably HCN2. Heteromultimer with KCNC2. Interacts with KCNC2. Interacts with KCNQ1. Forms a heterooligomer complex with KCNQ1 that targets to the membrane raft and leading to currents with an apparently instantaneous activation, a rapid deactivation process and a linear current-voltage relationship and decreases the amplitude of the outward current.

Its subcellular location is the cell membrane. It localises to the apical cell membrane. In terms of biological role, ancillary protein that functions as a regulatory subunit of the voltage-gated potassium (Kv) channel complex composed of pore-forming and potassium-conducting alpha subunits and of regulatory beta subunits. KCNE2 beta subunit modulates the gating kinetics and enhances stability of the channel complex. Alters the gating of the delayed rectifier Kv channel containing KCNB1 alpha subunit. Associates with KCNH2/HERG alpha subunit Kv channel to form the rapidly activating component of the delayed rectifying potassium current (IKr) in heart. May associate with KCNQ2 and/or KCNQ3 alpha subunits to modulate the native M-type current. May associate with HCN1 and HCN2 channel subunits to increase potassium current. Forms a heterooligomer complex with KCNQ1/KVLQT1 alpha subunits which leads to currents with an apparently instantaneous activation, a rapid deactivation process and a linear current-voltage relationship and decreases the amplitude of the outward current. KCNQ1-KCNE2 channel associates with Na(+)-coupled myo-inositol symporter in the apical membrane of choroid plexus epithelium and regulates the myo-inositol gradient between blood and cerebrospinal fluid with an impact on neuron excitability. The polypeptide is Potassium voltage-gated channel subfamily E member 2 (Mus musculus (Mouse)).